The primary structure comprises 310 residues: Forkhead box protein pes-1 (310 aa).

The segment covering 1–16 has biased composition (polar residues); that stretch reads MLPLSISTSPDPASQF. Disordered regions lie at residues 1–37, 58–77, 92–126, and 217–242; these read MLPLSISTSPDPASQFPTVPDLPTLTPTPSPTSGTAK, VSPSSTGLLEPKSSTVSPAP, KQSSSGVSSTRTSSLEPKSSAVSPAPSSPEASNPN, and SLRRKKNGKPRKYSKRSNTVSNPNPI. Positions 17-35 are enriched in low complexity; the sequence is PTVPDLPTLTPTPSPTSGT. The segment at residues 128 to 220 is a DNA-binding region (fork-head); it reads RPAYSYNALI…IGKDCGSLRR (93 aa). Over residues 218–231 the composition is skewed to basic residues; sequence LRRKKNGKPRKYSK.

The protein localises to the nucleus. It is found in the cytoplasm. Functionally, transcription factor. Plays a role in embryogenesis and later development, perhaps acting redundantly with forkhead protein fkh-2. The chain is Forkhead box protein pes-1 from Caenorhabditis briggsae.